The chain runs to 274 residues: Thiamine kinase (274 aa).

Belongs to the thiamine kinase family.

It carries out the reaction thiamine + ATP = thiamine phosphate + ADP + H(+). The protein operates within cofactor biosynthesis; thiamine diphosphate biosynthesis; thiamine phosphate from thiamine: step 1/1. In terms of biological role, catalyzes the ATP-dependent phosphorylation of thiamine to thiamine phosphate. Is involved in thiamine salvage. The chain is Thiamine kinase from Escherichia coli O139:H28 (strain E24377A / ETEC).